A 634-amino-acid polypeptide reads, in one-letter code: Probable LRR receptor-like serine/threonine-protein kinase At2g23950 (634 aa).

The signal sequence occupies residues 1–27 (MVVMKLITMKIFSVLLLLCFFVTCSLS). The Extracellular portion of the chain corresponds to 28-236 (SEPRNPEVEA…SSGRRTNILA (209 aa)). N-linked (GlcNAc...) asparagine glycans are attached at residues N96 and N109. 4 LRR repeats span residues 99 to 121 (NLRQ…ICSL), 123 to 145 (KLQT…VNQL), 147 to 167 (NLQY…ASLS), and 171 to 193 (HLSF…PART). N155 carries N-linked (GlcNAc...) asparagine glycosylation. A helical transmembrane segment spans residues 237-257 (VALGVSLGFAVSVILSLGFIW). Residues 258–634 (YRKKQRRLTM…SFAMELSGPR (377 aa)) lie on the Cytoplasmic side of the membrane. T296 carries the phosphothreonine modification. The Protein kinase domain maps to 299–554 (FSSKSILGAG…QVALLCTQFL (256 aa)). 305-313 (LGAGGFGNV) serves as a coordination point for ATP. T322 is subject to Phosphothreonine. K327 serves as a coordination point for ATP. 2 positions are modified to phosphoserine: S380 and S383. T395 carries the phosphothreonine modification. The active-site Proton acceptor is D422. Phosphothreonine occurs at positions 455, 456, and 461. Position 469 is a phosphotyrosine (Y469). The residue at position 471 (S471) is a Phosphoserine. At T472 the chain carries Phosphothreonine. A Phosphoserine modification is found at S476. T551 carries the post-translational modification Phosphothreonine.

The protein belongs to the protein kinase superfamily. Ser/Thr protein kinase family.

Its subcellular location is the membrane. It carries out the reaction L-seryl-[protein] + ATP = O-phospho-L-seryl-[protein] + ADP + H(+). The enzyme catalyses L-threonyl-[protein] + ATP = O-phospho-L-threonyl-[protein] + ADP + H(+). The protein is Probable LRR receptor-like serine/threonine-protein kinase At2g23950 of Arabidopsis thaliana (Mouse-ear cress).